Here is a 468-residue protein sequence, read N- to C-terminus: Glutamate--tRNA ligase (468 aa).

The short motif at 10–20 (PSPTGYLHIGG) is the 'HIGH' region element. The short motif at 252-256 (KLSKR) is the 'KMSKS' region element. Residue K255 participates in ATP binding.

It belongs to the class-I aminoacyl-tRNA synthetase family. Glutamate--tRNA ligase type 1 subfamily. Monomer.

Its subcellular location is the cytoplasm. The catalysed reaction is tRNA(Glu) + L-glutamate + ATP = L-glutamyl-tRNA(Glu) + AMP + diphosphate. Catalyzes the attachment of glutamate to tRNA(Glu) in a two-step reaction: glutamate is first activated by ATP to form Glu-AMP and then transferred to the acceptor end of tRNA(Glu). This is Glutamate--tRNA ligase from Mycoplasmopsis pulmonis (strain UAB CTIP) (Mycoplasma pulmonis).